The primary structure comprises 195 residues: Ras-related protein Rab-31 (195 aa).

7 residues coordinate GTP: G16, G18, K19, S20, S21, D32, and H33. Residue S20 coordinates Mg(2+). 2 consecutive short sequence motifs (switch) follow at residues 30-42 and 63-79; these read HFDHNISPTIGAS and AGQERFHSLAPMYYRGS. S36 carries the phosphoserine modification. Residues T38, G64, N119, D122, A150, and K151 each contribute to the GTP site. T38 contributes to the Mg(2+) binding site. S-geranylgeranyl cysteine attachment occurs at residues C194 and C195.

The protein belongs to the small GTPase superfamily. Rab family. In terms of assembly, interacts (in GDP-bound form) with RIN3 and GAPVD1, which function as guanine exchange factors (GEF). Interacts (in GTP-bound form) with EEA1. Interacts with NGFR. Interacts with EGFR. Interacts with OCRL. Interacts (in GTP-bound form) with APPL2; interaction contributes to or enhances recruitment of APPL2 to the phagosomes; interaction enhances Fc-gamma receptor-mediated phagocytosis through PI3K/Akt signaling in macrophages. It depends on Mg(2+) as a cofactor. In terms of tissue distribution, detected in brain astrocytes, spleen and intestine (at protein level).

Its subcellular location is the early endosome. It is found in the golgi apparatus. It localises to the trans-Golgi network. The protein localises to the trans-Golgi network membrane. The protein resides in the cytoplasmic vesicle. Its subcellular location is the phagosome. It is found in the phagosome membrane. It carries out the reaction GTP + H2O = GDP + phosphate + H(+). With respect to regulation, regulated by guanine nucleotide exchange factors (GEFs) including RIN3 and GAPVD1 which promote the exchange of bound GDP for free GTP. Regulated by GTPase activating proteins (GAPs) which increase the GTP hydrolysis activity. Inhibited by GDP dissociation inhibitors (GDIs) which prevent Rab-GDP dissociation. The small GTPases Rab are key regulators of intracellular membrane trafficking, from the formation of transport vesicles to their fusion with membranes. Rabs cycle between an inactive GDP-bound form and an active GTP-bound form that is able to recruit to membranes different set of downstream effectors directly responsible for vesicle formation, movement, tethering and fusion. Required for the integrity and for normal function of the Golgi apparatus and the trans-Golgi network. Plays a role in insulin-stimulated translocation of GLUT4 to the cell membrane. Plays a role in the maturation of phagosomes that engulf pathogens, such as S.aureus and Mycobacterium. Plays a role in M6PR transport from the trans-Golgi network to endosomes. Plays a role in the internalization of EGFR from the cell membrane into endosomes. This is Ras-related protein Rab-31 from Rattus norvegicus (Rat).